We begin with the raw amino-acid sequence, 173 residues long: NADH-ubiquinone oxidoreductase chain 6 (173 aa).

A run of 5 helical transmembrane segments spans residues 1-21 (MTYF…AVAS), 27-47 (YGVV…LSLG), 48-68 (ASFV…VVFV), 87-107 (VIGY…IGGF), and 139-159 (WGAG…FVVL).

This sequence belongs to the complex I subunit 6 family.

Its subcellular location is the mitochondrion membrane. It carries out the reaction a ubiquinone + NADH + 5 H(+)(in) = a ubiquinol + NAD(+) + 4 H(+)(out). In terms of biological role, core subunit of the mitochondrial membrane respiratory chain NADH dehydrogenase (Complex I) that is believed to belong to the minimal assembly required for catalysis. Complex I functions in the transfer of electrons from NADH to the respiratory chain. The immediate electron acceptor for the enzyme is believed to be ubiquinone. This is NADH-ubiquinone oxidoreductase chain 6 (MT-ND6) from Brachyramphus brevirostris (Kittlitz's murrelet).